The chain runs to 462 residues: Cysteine--tRNA ligase (462 aa).

Residue Cys-24 coordinates Zn(2+). Positions 26–36 (PTVYDDAHLGH) match the 'HIGH' region motif. The Zn(2+) site is built by Cys-199, His-224, and Glu-228. Residues 256–260 (KMSKS) carry the 'KMSKS' region motif. Lys-259 contacts ATP.

It belongs to the class-I aminoacyl-tRNA synthetase family. Monomer. Zn(2+) is required as a cofactor.

Its subcellular location is the cytoplasm. The enzyme catalyses tRNA(Cys) + L-cysteine + ATP = L-cysteinyl-tRNA(Cys) + AMP + diphosphate. The protein is Cysteine--tRNA ligase of Campylobacter jejuni subsp. jejuni serotype O:23/36 (strain 81-176).